The sequence spans 439 residues: Cysteine--tRNA ligase (439 aa).

A Zn(2+)-binding site is contributed by C28. A 'HIGH' region motif is present at residues 30-40 (ITVYDLCHIGH). C209, H234, and E238 together coordinate Zn(2+). The short motif at 266–270 (KMSKS) is the 'KMSKS' region element. An ATP-binding site is contributed by K269.

Belongs to the class-I aminoacyl-tRNA synthetase family. In terms of assembly, monomer. It depends on Zn(2+) as a cofactor.

It is found in the cytoplasm. It catalyses the reaction tRNA(Cys) + L-cysteine + ATP = L-cysteinyl-tRNA(Cys) + AMP + diphosphate. This is Cysteine--tRNA ligase from Shigella boydii serotype 4 (strain Sb227).